The primary structure comprises 409 residues: MSVFDSKFNGIHVYSEIGELETVLVHEPGREIDYITPARLDELLFSAILESHDARKEHQSFVKIMKDRGINVVELTDLVAETYDLASKAAKEEFIETFLEETVPVLTEANKKAVRAFLLSKPTHEMVEFMMSGITKYELGVESENELIVDPMPNLYFTRDPFASVGNGVTIHFMRYIVRRRETLFARFVFRNHPKLVKTPWYYDPAMKMPIEGGDVFIYNNETLVVGVSERTDLDTITLLAKNIKANKEVEFKRIVAINVPKWTNLMHLDTWLTMLDKNKFLYSPIANDVFKFWDYDLVNGGAEPQPQLNGLPLDKLLASIINKEPVLIPIGGAGATEMEIARETNFDGTNYLAIKPGLVIGYDRNEKTNAALKAAGITVLPFHGNQLSLGMGNARCMSMPLSRKDVKW.

C397 functions as the Amidino-cysteine intermediate in the catalytic mechanism.

Belongs to the arginine deiminase family.

The protein localises to the cytoplasm. The enzyme catalyses L-arginine + H2O = L-citrulline + NH4(+). It functions in the pathway amino-acid degradation; L-arginine degradation via ADI pathway; carbamoyl phosphate from L-arginine: step 1/2. This chain is Arginine deiminase (arcA), found in Metamycoplasma hominis (Mycoplasma hominis).